A 207-amino-acid polypeptide reads, in one-letter code: Thymidylate kinase (207 aa).

Residue 12–19 (GVDGAGKS) coordinates ATP.

Belongs to the thymidylate kinase family.

The enzyme catalyses dTMP + ATP = dTDP + ADP. Its function is as follows. Phosphorylation of dTMP to form dTDP in both de novo and salvage pathways of dTTP synthesis. This chain is Thymidylate kinase, found in Bordetella petrii (strain ATCC BAA-461 / DSM 12804 / CCUG 43448).